We begin with the raw amino-acid sequence, 114 residues long: Fumarate reductase subunit D (114 aa).

Transmembrane regions (helical) follow at residues 24-44 (ISALAFPVLILILGILLPLGI), 49-69 (GIIAFAHHWFGKLVILVLTIF), and 94-114 (LIFYGLAVLYTVVAIWGVASI).

Belongs to the FrdD family. As to quaternary structure, part of an enzyme complex containing four subunits: a flavoprotein (FrdA), an iron-sulfur protein (FrdB), and two hydrophobic anchor proteins (FrdC and FrdD).

The protein localises to the cell inner membrane. Functionally, anchors the catalytic components of the fumarate reductase complex to the cell membrane, binds quinones. The chain is Fumarate reductase subunit D from Actinobacillus succinogenes (strain ATCC 55618 / DSM 22257 / CCUG 43843 / 130Z).